The sequence spans 823 residues: Valine--tRNA ligase (823 aa).

Lys547 serves as a coordination point for ATP.

Belongs to the class-I aminoacyl-tRNA synthetase family. ValS type 2 subfamily.

The protein localises to the cytoplasm. The catalysed reaction is tRNA(Val) + L-valine + ATP = L-valyl-tRNA(Val) + AMP + diphosphate. Catalyzes the attachment of valine to tRNA(Val). As ValRS can inadvertently accommodate and process structurally similar amino acids such as threonine, to avoid such errors, it has a 'posttransfer' editing activity that hydrolyzes mischarged Thr-tRNA(Val) in a tRNA-dependent manner. In Aeropyrum pernix (strain ATCC 700893 / DSM 11879 / JCM 9820 / NBRC 100138 / K1), this protein is Valine--tRNA ligase (valS).